A 93-amino-acid chain; its full sequence is Protein LSO1 (93 aa).

A disordered region spans residues 1-73 (MHNTGKRYSE…TEKLRAKKER (73 aa)). Positions 20 to 83 (ARKRRQAYEK…DQLLAAEEEA (64 aa)) form a coiled coil. Composition is skewed to basic and acidic residues over residues 25-49 (QAYEKDQLEKQQLEAQEAQRWEEGA) and 57-73 (LIMEQKKTEKLRAKKER).

The protein resides in the nucleus. It localises to the cytoplasm. In terms of biological role, likely to play a role in iron homeostasis. This chain is Protein LSO1, found in Saccharomyces cerevisiae (strain ATCC 204508 / S288c) (Baker's yeast).